The chain runs to 381 residues: Anti-sigma-I factor RsgI (381 aa).

The Cytoplasmic segment spans residues 1 to 63 (MRRGIIVEKN…FDFFKLRPFK (63 aa)). A RsgI N-terminal anti-sigma domain is found at 2–50 (RRGIIVEKNKKFVTLLTPDGQFLKAKNDRHSYEIGEEIMLPSETRMGRR). Residues 64-84 (MGIFTMTAIMLFIFIVLPVFS) form a helical membrane-spanning segment. Residues 85-381 (NNKAYAYMTI…NEDSPSAPGE (297 aa)) lie on the Extracellular side of the membrane. Residues 198–381 (SDMQTREKAK…NEDSPSAPGE (184 aa)) are disordered. Composition is skewed to basic and acidic residues over residues 200–210 (MQTREKAKKEG), 219–244 (SNEKNDNKDIKDDSSKPSGEEDQKSD), 273–321 (GDQK…DKGN), and 349–359 (SRRDNASDRRN).

Interacts (via RsgI N-terminal anti-sigma domain) with SigI.

Its subcellular location is the cell membrane. Anti-sigma factor for SigI. Negatively regulates SigI activity through direct interaction. This chain is Anti-sigma-I factor RsgI, found in Bacillus subtilis (strain 168).